A 99-amino-acid polypeptide reads, in one-letter code: Acylphosphatase (99 aa).

An Acylphosphatase-like domain is found at 5–97; it reads ILQVMIRGRV…RAGEKFSVLP (93 aa). Catalysis depends on residues R20 and N38.

The protein belongs to the acylphosphatase family.

It carries out the reaction an acyl phosphate + H2O = a carboxylate + phosphate + H(+). The protein is Acylphosphatase (acyP) of Bradyrhizobium diazoefficiens (strain JCM 10833 / BCRC 13528 / IAM 13628 / NBRC 14792 / USDA 110).